The sequence spans 92 residues: Small ribosomal subunit protein bS18 (92 aa).

It belongs to the bacterial ribosomal protein bS18 family. As to quaternary structure, part of the 30S ribosomal subunit. Forms a tight heterodimer with protein bS6.

Its function is as follows. Binds as a heterodimer with protein bS6 to the central domain of the 16S rRNA, where it helps stabilize the platform of the 30S subunit. This chain is Small ribosomal subunit protein bS18, found in Cupriavidus necator (strain ATCC 17699 / DSM 428 / KCTC 22496 / NCIMB 10442 / H16 / Stanier 337) (Ralstonia eutropha).